The sequence spans 546 residues: Probable protein kinase UbiB (546 aa).

A Protein kinase domain is found at aspartate 124 to leucine 502. Residues leucine 130–valine 138 and lysine 153 contribute to the ATP site. The active-site Proton acceptor is aspartate 288. 2 helical membrane passes run tyrosine 501–proline 521 and glutamate 522–tryptophan 542.

It belongs to the ABC1 family. UbiB subfamily.

The protein resides in the cell inner membrane. Its pathway is cofactor biosynthesis; ubiquinone biosynthesis [regulation]. Its function is as follows. Is probably a protein kinase regulator of UbiI activity which is involved in aerobic coenzyme Q (ubiquinone) biosynthesis. The chain is Probable protein kinase UbiB from Salmonella gallinarum (strain 287/91 / NCTC 13346).